The primary structure comprises 195 residues: A-type ATP synthase subunit E (195 aa).

It belongs to the V-ATPase E subunit family. As to quaternary structure, has multiple subunits with at least A(3), B(3), C, D, E, F, H, I and proteolipid K(x).

Its subcellular location is the cell membrane. Functionally, component of the A-type ATP synthase that produces ATP from ADP in the presence of a proton gradient across the membrane. The chain is A-type ATP synthase subunit E from Staphylothermus marinus (strain ATCC 43588 / DSM 3639 / JCM 9404 / F1).